The following is a 608-amino-acid chain: UvrABC system protein C (608 aa).

The GIY-YIG domain maps to 16–94; the sequence is NRPGVYRMFD…IKEWRPPYNI (79 aa). Residues 204–239 form the UVR domain; it reads NALADELNVGMEQAAMRLDFEKAAELRDQVAILRRV.

The protein belongs to the UvrC family. As to quaternary structure, interacts with UvrB in an incision complex.

It is found in the cytoplasm. Its function is as follows. The UvrABC repair system catalyzes the recognition and processing of DNA lesions. UvrC both incises the 5' and 3' sides of the lesion. The N-terminal half is responsible for the 3' incision and the C-terminal half is responsible for the 5' incision. This chain is UvrABC system protein C, found in Pseudomonas aeruginosa (strain ATCC 15692 / DSM 22644 / CIP 104116 / JCM 14847 / LMG 12228 / 1C / PRS 101 / PAO1).